Reading from the N-terminus, the 70-residue chain is Large ribosomal subunit protein eL24 (70 aa).

Zn(2+) is bound by residues cysteine 7, cysteine 10, cysteine 33, and cysteine 37. The C4-type zinc-finger motif lies at cysteine 7 to cysteine 37.

The protein belongs to the eukaryotic ribosomal protein eL24 family. As to quaternary structure, part of the 50S ribosomal subunit. Forms a cluster with proteins L3 and L14. Zn(2+) is required as a cofactor.

In terms of biological role, binds to the 23S rRNA. This Methanocaldococcus jannaschii (strain ATCC 43067 / DSM 2661 / JAL-1 / JCM 10045 / NBRC 100440) (Methanococcus jannaschii) protein is Large ribosomal subunit protein eL24.